A 1470-amino-acid polypeptide reads, in one-letter code: MFIPNDRPSVLQLPKHEKDSTAADIKSIVANRDRRLIAVATNDAIYIWLANPQLLLCSVGVIDANFKETRGELKEIYWKPDSTSIAVTTNQCKILIYNLDLRDDEQCYNFTDSADPYFQRNSPELFIKGSRPTAHLHPTIIINLADIPTCCVPSRDEFLVCLQNGFTHHVTWTGEIIASLSFRASSIPFSVDQLQSKSENITSKSTYIFDAVYAPLLGGFAIVLSDGQGALLTSNDPNFAPNAILGVWAPNMKDATCCDVNHKFLLILFGCKNGDVCAYNIDELNGSLVQSFRVAPKVTNGPDLTNRLGPVHRITALANGYGFGAIWSPLSGAHALPRLVAVFTSFGAQSFCNLEGVVEEDQNDRYTAIEWGPEGFQLWLGTENELMMQPFVRSASCSSPAMEHCDRAVLMSDSQVLISAARDREAEACAPHSVWDHITVTHEYLSSNWPLRYASTDRNYKHLVVAGDQGMAYCSLSNRRWKIFGNETQEKNLLVTGGVFIWNDDVIGVVGVAADTDKSHLSFYPISQRLDSRYASVVDLEHKSVMSVLRDDVCAVFDISAQITLYKLTAHLETGRDAFTKVSTEIVTVIRINEIVPHPTCIVSLQMTQLNLDVRGKLSPAFYSSIDTVLVNISGRLITLSVNEDGKLHQPMVIASYVEKMWHDRCQVSQSTQSQNQDLPWKNHRRNGSNVSIQSVSTSTTSEPSSPMNQSCSSHLSNALWIACGAKGIKVWMPLVPGKRNLATQEMTFIAKRIMLPFELDIYPIVISAKDCLAMGVESQLQHVARASRNQGQMESITMYGLHRNSEVFVHHLLRQLLKRNLGVFALELAGACRSLPHFTHALELLLHGVLEEEATSSEPIPDPLLPRCVAFIHEFPEFLKTVAHCARKTELALWRTLFDVTGSPNALFEECLQLKQLENAASFVIVLQNLETTEVSMDQAARLVKEALEEKKWTIAKEMVRFARSIGSEDIDAFFRTPPPSAKTSLSRRPTVSSPSADSSTEFVINRFQAGAAGGRLNKVRHSQSTEQKDAPRKDSIGGSSKDKMALSWGLSGELSPQLATNRLAAKMTSILEDHAWHLLNNYWLLDLGFFWSELQFDLLGLLETRRKQISLSPKTTNENCFLIEDFALALTRLHAQFSWPYPLIGSQFVHQIEKKLGNIRVSQSTASLNGLLNDSLDNIKKPKARKLERTVVDLNGARSRIRETDIEASEEDVEIQEAVLERVRGSAVELAPVIDRSPSTSSSMNHHAPLAPPSPSSCDSRSLAGDCYQNTDFLVGEKSSRGNLQSSHQLELLLSLFSQTATIDWIFLFCLLSRDERKLRQEINVSMVRRAGEKSFARVRFACSELSRWAVEKCCGYVALLQAFDAHLAVVAEQAGCADLKFSPDNENRKASQKTSADDPKRGRRRADSGSSKLNNSFSNPKLNGMNGGRRERSRSADRAHKSVKRYDDVVCAEDALEKANEEGCSIM.

WD repeat units follow at residues 20–58 (STAADIKSIVANRDRRLIAVATNDAIYIWLANPQLLLCS), 68–107 (ETRGELKEIYWKPDSTSIAVTTNQCKILIYNLDLRDDEQC), and 472–512 (AYCS…VVGV). Disordered regions lie at residues 673 to 710 (QSQNQDLPWKNHRRNGSNVSIQSVSTSTTSEPSSPMNQ), 975 to 1001 (FFRTPPPSAKTSLSRRPTVSSPSADSS), 1017 to 1045 (RLNKVRHSQSTEQKDAPRKDSIGGSSKDK), and 1238 to 1259 (RSPSTSSSMNHHAPLAPPSPSS). The segment covering 689-707 (SNVSIQSVSTSTTSEPSSP) has biased composition (low complexity). Positions 983-1001 (AKTSLSRRPTVSSPSADSS) are enriched in polar residues. Positions 1028–1045 (EQKDAPRKDSIGGSSKDK) are enriched in basic and acidic residues. The helical transmembrane segment at 1294–1314 (LLLSLFSQTATIDWIFLFCLL) threads the bilayer. Basic and acidic residues predominate over residues 1385–1403 (SPDNENRKASQKTSADDPK). Residues 1385–1447 (SPDNENRKAS…SADRAHKSVK (63 aa)) form a disordered region. A compositionally biased stretch (polar residues) spans 1411–1424 (SGSSKLNNSFSNPK). Residues 1431-1447 (GRRERSRSADRAHKSVK) are compositionally biased toward basic and acidic residues.

This sequence belongs to the RIC1 family. As to quaternary structure, component of a guanine nucleotide exchange factor (GEF) complex.

Its subcellular location is the membrane. In terms of biological role, probable component of a guanine nucleotide exchange factor (GEF) that may be required for efficient fusion of endosome-derived vesicles with the Golgi. The sequence is that of Guanine nucleotide exchange factor subunit R06F6.8 from Caenorhabditis elegans.